The chain runs to 193 residues: Xanthine phosphoribosyltransferase (193 aa).

Residues Leu20 and Asn27 each coordinate xanthine. 127 to 131 (AYGNA) contributes to the 5-phospho-alpha-D-ribose 1-diphosphate binding site. Xanthine is bound at residue Lys155.

This sequence belongs to the purine/pyrimidine phosphoribosyltransferase family. Xpt subfamily. As to quaternary structure, homodimer.

The protein localises to the cytoplasm. The catalysed reaction is XMP + diphosphate = xanthine + 5-phospho-alpha-D-ribose 1-diphosphate. The protein operates within purine metabolism; XMP biosynthesis via salvage pathway; XMP from xanthine: step 1/1. In terms of biological role, converts the preformed base xanthine, a product of nucleic acid breakdown, to xanthosine 5'-monophosphate (XMP), so it can be reused for RNA or DNA synthesis. This is Xanthine phosphoribosyltransferase from Porphyromonas gingivalis (strain ATCC BAA-308 / W83).